The following is a 424-amino-acid chain: Probable methyltransferase EP424R (424 aa).

Positions 103–315 (QIVTNAWLKM…TYIVGKNRLR (213 aa)) constitute an Adrift-type SAM-dependent 2'-O-MTase domain. Positions 135 and 228 each coordinate S-adenosyl-L-methionine. Lysine 268 functions as the Proton acceptor in the catalytic mechanism.

Its subcellular location is the virion. In Ornithodoros (relapsing fever ticks), this protein is Probable methyltransferase EP424R.